A 377-amino-acid polypeptide reads, in one-letter code: 5-hydroxytryptamine receptor 1D (377 aa).

The segment at 1–23 (MSPLNQSAEGLPQEASNRSLNAT) is disordered. Residues 1 to 38 (MSPLNQSAEGLPQEASNRSLNATETSEAWDPRTLQALK) are Extracellular-facing. 3 N-linked (GlcNAc...) asparagine glycosylation sites follow: Asn-5, Asn-17, and Asn-21. The helical transmembrane segment at 39 to 64 (ISLAVVLSVITLATVLSNAFVLTTIL) threads the bilayer. The Cytoplasmic portion of the chain corresponds to 65–75 (LTRKLHTPANY). Residues 76–97 (LIGSLATTDLLVSILVMPISIA) traverse the membrane as a helical segment. Topologically, residues 98 to 109 (YTITHTWNFGQI) are extracellular. Residues 110–134 (LCDIWLSSDITCCTASILHLCVIAL) form a helical membrane-spanning segment. Cys-111 and Cys-188 form a disulfide bridge. Serotonin is bound by residues Asp-118 and Cys-122. Residues 135–137 (DRY) carry the DRY motif; important for ligand-induced conformation changes motif. The Cytoplasmic segment spans residues 135–154 (DRYWAITDALEYSKRRTAGH). The helical transmembrane segment at 155–176 (AATMIAIVWAISICISIPPLFW) threads the bilayer. Residues 177–194 (RQAKAQEEMSDCLVNTSQ) lie on the Extracellular side of the membrane. A helical transmembrane segment spans residues 195–218 (ISYTIYSTCGAFYIPSVLLIILYG). Residues 219 to 300 (RIYRAARNRI…ISAARERKAT (82 aa)) lie on the Cytoplasmic side of the membrane. Residues 301 to 326 (KILGIILGAFIICWLPFFVVSLVLPI) traverse the membrane as a helical segment. Ser-321 lines the serotonin pocket. Over 327–335 (CRDSCWIHP) the chain is Extracellular. Residues 336-359 (ALFDFFTWLGYLNSLINPIIYTVF) form a helical membrane-spanning segment. Positions 352-356 (NPIIY) match the NPxxY motif; important for ligand-induced conformation changes and signaling motif. Residues 360–377 (NEEFRQAFQKIVPFRKAS) lie on the Cytoplasmic side of the membrane.

It belongs to the G-protein coupled receptor 1 family. Homodimer. Heterodimer with HTR1B. In terms of tissue distribution, detected in brain neocortex and caudate nucleus (at protein level).

Its subcellular location is the cell membrane. G-protein coupled receptor for 5-hydroxytryptamine (serotonin). Also functions as a receptor for ergot alkaloid derivatives, various anxiolytic and antidepressant drugs and other psychoactive substances. Ligand binding causes a conformation change that triggers signaling via guanine nucleotide-binding proteins (G proteins) and modulates the activity of downstream effectors, such as adenylate cyclase. HTR1D is coupled to G(i)/G(o) G alpha proteins and mediates inhibitory neurotransmission by inhibiting adenylate cyclase activity. Regulates the release of 5-hydroxytryptamine in the brain, and thereby affects neural activity. May also play a role in regulating the release of other neurotransmitters. May play a role in vasoconstriction. The chain is 5-hydroxytryptamine receptor 1D from Homo sapiens (Human).